A 58-amino-acid chain; its full sequence is uncharacterized protein (58 aa).

Positions 23 to 51 (TTTSTSTTTTSTTTSTTTSTTTTTTTTTT) are enriched in low complexity. The disordered stretch occupies residues 23–58 (TTTSTSTTTTSTTTSTTTSTTTTTTTTTTKDFNTET).

This is an uncharacterized protein from Dictyostelium discoideum (Social amoeba).